We begin with the raw amino-acid sequence, 284 residues long: AA14 family lytic polysaccharide monooxygenase B (284 aa).

The signal sequence occupies residues 1 to 20; sequence MGYLSKLVTSVVFAIPLASA. Residues N42, N96, N142, and N183 are each glycosylated (N-linked (GlcNAc...) asparagine). A disulfide bond links C197 and C218.

Belongs to the polysaccharide monooxygenase AA14 family. It depends on Cu(2+) as a cofactor.

The protein localises to the secreted. Lytic polysaccharide monooxygenase (LPMO) that plays decomposes some specific network structures formed between cellulose and hemicellulose in the plant cell walls. Catalysis by LPMOs requires the reduction of the active-site copper from Cu(II) to Cu(I) by a reducing agent and H(2)O(2) or O(2) as a cosubstrate. The sequence is that of AA14 family lytic polysaccharide monooxygenase B from Talaromyces rugulosus (Penicillium rugulosum).